We begin with the raw amino-acid sequence, 892 residues long: Nitrogen assimilation transcription factor nirA (892 aa).

Residues 1–32 (MGEKLDPELSSDGPHTKSSSKGQGTSTDNAPA) form a disordered region. Positions 16–27 (TKSSSKGQGTST) are enriched in low complexity. Residues 42-70 (CIACRRRKSKCDGNLPSCAACSSVYHTTC) constitute a DNA-binding region (zn(2)-C6 fungal-type). 3 disordered regions span residues 646–714 (GPWD…SGPV), 731–761 (AHNE…SAQE), and 842–892 (PNIP…SFQR). Residues 649–674 (DQAASPSTTSDSPPSVSSQSVVATTD) are compositionally biased toward low complexity. Polar residues-rich tracts occupy residues 675 to 714 (LSQP…SGPV), 746 to 761 (VSTS…SAQE), and 876 to 892 (NVNS…SFQR).

The protein resides in the nucleus. Pathway-specific regulatory gene of nitrate assimilation; it activates the transcription of the genes for nitrate and nitrite reductases (niaD and niiA). The polypeptide is Nitrogen assimilation transcription factor nirA (nirA) (Emericella nidulans (strain FGSC A4 / ATCC 38163 / CBS 112.46 / NRRL 194 / M139) (Aspergillus nidulans)).